The following is a 185-amino-acid chain: Peptidyl-tRNA hydrolase (185 aa).

A tRNA-binding site is contributed by Tyr-14. Catalysis depends on His-19, which acts as the Proton acceptor. The tRNA site is built by Phe-64, Asn-66, and Asn-112.

It belongs to the PTH family. Monomer.

Its subcellular location is the cytoplasm. It catalyses the reaction an N-acyl-L-alpha-aminoacyl-tRNA + H2O = an N-acyl-L-amino acid + a tRNA + H(+). In terms of biological role, hydrolyzes ribosome-free peptidyl-tRNAs (with 1 or more amino acids incorporated), which drop off the ribosome during protein synthesis, or as a result of ribosome stalling. Functionally, catalyzes the release of premature peptidyl moieties from peptidyl-tRNA molecules trapped in stalled 50S ribosomal subunits, and thus maintains levels of free tRNAs and 50S ribosomes. The sequence is that of Peptidyl-tRNA hydrolase from Lacticaseibacillus casei (strain BL23) (Lactobacillus casei).